The chain runs to 216 residues: ATP phosphoribosyltransferase (216 aa).

The protein belongs to the ATP phosphoribosyltransferase family. Short subfamily. Heteromultimer composed of HisG and HisZ subunits.

It is found in the cytoplasm. The enzyme catalyses 1-(5-phospho-beta-D-ribosyl)-ATP + diphosphate = 5-phospho-alpha-D-ribose 1-diphosphate + ATP. The protein operates within amino-acid biosynthesis; L-histidine biosynthesis; L-histidine from 5-phospho-alpha-D-ribose 1-diphosphate: step 1/9. Functionally, catalyzes the condensation of ATP and 5-phosphoribose 1-diphosphate to form N'-(5'-phosphoribosyl)-ATP (PR-ATP). Has a crucial role in the pathway because the rate of histidine biosynthesis seems to be controlled primarily by regulation of HisG enzymatic activity. In Lachnospira eligens (strain ATCC 27750 / DSM 3376 / VPI C15-48 / C15-B4) (Eubacterium eligens), this protein is ATP phosphoribosyltransferase.